Here is a 177-residue protein sequence, read N- to C-terminus: NAD(P)H-quinone oxidoreductase subunit 6, chloroplastic (177 aa).

The next 5 membrane-spanning stretches (helical) occupy residues 10–30 (IFLVFLGSGLILGGLGVVLLT), 32–52 (PVYSAFSLGLVLVCISLFHIP), 61–81 (AQLLIYVGAINVLIVFAVMFM), 92–112 (LWTVGDGVTSLICTSILFSLI), and 152–172 (FYLPFELISIILLVALVGAIA).

Belongs to the complex I subunit 6 family. In terms of assembly, NDH is composed of at least 16 different subunits, 5 of which are encoded in the nucleus.

It localises to the plastid. It is found in the chloroplast thylakoid membrane. It catalyses the reaction a plastoquinone + NADH + (n+1) H(+)(in) = a plastoquinol + NAD(+) + n H(+)(out). The catalysed reaction is a plastoquinone + NADPH + (n+1) H(+)(in) = a plastoquinol + NADP(+) + n H(+)(out). In terms of biological role, NDH shuttles electrons from NAD(P)H:plastoquinone, via FMN and iron-sulfur (Fe-S) centers, to quinones in the photosynthetic chain and possibly in a chloroplast respiratory chain. The immediate electron acceptor for the enzyme in this species is believed to be plastoquinone. Couples the redox reaction to proton translocation, and thus conserves the redox energy in a proton gradient. This chain is NAD(P)H-quinone oxidoreductase subunit 6, chloroplastic (ndhG), found in Illicium oligandrum (Star anise).